The sequence spans 277 residues: Putative phosphoenolpyruvate synthase regulatory protein (277 aa).

Position 157–164 (Gly-157–Thr-164) interacts with ADP.

The protein belongs to the pyruvate, phosphate/water dikinase regulatory protein family. PSRP subfamily.

It carries out the reaction [pyruvate, water dikinase] + ADP = [pyruvate, water dikinase]-phosphate + AMP + H(+). The catalysed reaction is [pyruvate, water dikinase]-phosphate + phosphate + H(+) = [pyruvate, water dikinase] + diphosphate. In terms of biological role, bifunctional serine/threonine kinase and phosphorylase involved in the regulation of the phosphoenolpyruvate synthase (PEPS) by catalyzing its phosphorylation/dephosphorylation. The protein is Putative phosphoenolpyruvate synthase regulatory protein of Citrobacter koseri (strain ATCC BAA-895 / CDC 4225-83 / SGSC4696).